The chain runs to 308 residues: Ribosomal RNA large subunit methyltransferase F (308 aa).

Residues 190 to 212 are disordered; sequence DSAASARAGSERKRRNLGQDKND.

This sequence belongs to the methyltransferase superfamily. METTL16/RlmF family.

It localises to the cytoplasm. It carries out the reaction adenosine(1618) in 23S rRNA + S-adenosyl-L-methionine = N(6)-methyladenosine(1618) in 23S rRNA + S-adenosyl-L-homocysteine + H(+). Specifically methylates the adenine in position 1618 of 23S rRNA. The protein is Ribosomal RNA large subunit methyltransferase F of Citrobacter koseri (strain ATCC BAA-895 / CDC 4225-83 / SGSC4696).